Here is a 272-residue protein sequence, read N- to C-terminus: Methylsterol monooxygenase 2-1 (272 aa).

Helical transmembrane passes span 24-44, 72-94, and 107-127; these read IGSF…YIFL, LLLY…FRFM, and VVSA…YWGH. Residues 113-259 form the Fatty acid hydroxylase domain; that stretch reads LFYFIIEDFV…FVYMDWIFGT (147 aa). Positions 127-131 match the Histidine box-1 motif; sequence HRILH. The short motif at 140 to 144 is the Histidine box-2 element; sequence HSVHH. The next 2 helical transmembrane spans lie at 162-182 and 209-229; these read ILFL…HLIT and NFLP…AYSA. Residues 231 to 237 carry the Histidine box-3 motif; the sequence is FHDYHHR.

The protein belongs to the sterol desaturase family. Fe cation is required as a cofactor. As to expression, strongly expressed in leaves, flowers, siliques and developing seeds.

The protein localises to the endoplasmic reticulum membrane. The enzyme catalyses 4,4-dimethyl-5alpha-cholest-7-en-3beta-ol + 6 Fe(II)-[cytochrome b5] + 3 O2 + 5 H(+) = 4alpha-carboxy-4beta-methyl-5alpha-cholest-7-ene-3beta-ol + 6 Fe(III)-[cytochrome b5] + 4 H2O. It catalyses the reaction 24-methylidenelophenol + 6 Fe(II)-[cytochrome b5] + 3 O2 + 5 H(+) = 4alpha-carboxy-ergosta-7,24(24(1))-dien-3beta-ol + 6 Fe(III)-[cytochrome b5] + 4 H2O. Functionally, non-heme iron oxygenase involved in sterols biosynthesis by catalyzing the removal of the second methyl group at the C-4 position. 24-ethylidenelophenol and 24-ethyllophenol are the preferred substrates. Together with SMO2-2, required during embryogenesis, probably by maintaining sterols and auxin homeostasis. In Arabidopsis thaliana (Mouse-ear cress), this protein is Methylsterol monooxygenase 2-1.